We begin with the raw amino-acid sequence, 181 residues long: ADP-ribosylation factor 1 (181 aa).

Glycine 2 carries the N-myristoyl glycine lipid modification. GTP contacts are provided by residues glycine 24–threonine 31, asparagine 126–aspartate 129, and alanine 160.

It belongs to the small GTPase superfamily. Arf family. As to quaternary structure, may interact with GTPase RAB5b.

Its subcellular location is the golgi apparatus membrane. It catalyses the reaction GTP + H2O = GDP + phosphate + H(+). Alternates between an inactive GDP-bound form and an active GTP-bound form. Intrinsic GTPase activity is almost undetectable in vitro. Activated by a guanine nucleotide-exchange factor (GEF) and inactivated by GTPase-activating protein ARFGAP1. Its function is as follows. Small GTPase involved in protein trafficking between different compartments. Modulates vesicle budding and uncoating within the Golgi complex. In its GTP-bound form, triggers the recruitment of coatomer proteins to the Golgi membrane. The hydrolysis of ARF1-bound GTP, which is mediated by ARFGAPs proteins, is required for dissociation of coat proteins from Golgi membranes and vesicles. Regulates the transport of N-acylated AK2 to the parasitophorous vacuole membrane. May be involved in the activation of lipid kinase PIP5K. The polypeptide is ADP-ribosylation factor 1 (ARF1) (Plasmodium falciparum (isolate NF54)).